The sequence spans 510 residues: Beta-glucosidase 26 (510 aa).

Residues 1–27 form the signal peptide; that stretch reads MRKFIAALRLALAAAAHLLLTLPPAQC. Q59 provides a ligand contact to a beta-D-glucoside. N-linked (GlcNAc...) asparagine glycosylation is found at N87 and N127. Residues H160 and 205 to 206 contribute to the a beta-D-glucoside site; that span reads NE. E206 (proton donor) is an active-site residue. A disulfide bond links C225 and C228. N-linked (GlcNAc...) asparagine glycosylation is present at N233. The a beta-D-glucoside site is built by Y345 and E416. Catalysis depends on E416, which acts as the Nucleophile. N-linked (GlcNAc...) asparagine glycosylation is present at N424. Residues W463, 470–471, and F479 contribute to the a beta-D-glucoside site; that span reads EW.

Belongs to the glycosyl hydrolase 1 family.

It catalyses the reaction Hydrolysis of terminal, non-reducing beta-D-glucosyl residues with release of beta-D-glucose.. Functionally, hydrolyzes p-nitrophenyl beta-D-glucoside, p-nitrophenyl beta-D-mannoside, p-nitrophenyl beta-D-galactoside, p-nitrophenyl beta-D-xyloside, p-nitrophenyl beta-D-fucoside, p-nitrophenyl beta-L-arabinoside, cello-oligosaccharides, laminari-oligosaccharides and sophorose. The polypeptide is Beta-glucosidase 26 (BGLU26) (Oryza sativa subsp. japonica (Rice)).